A 218-amino-acid chain; its full sequence is Non-structural protein NP-1 (218 aa).

Disordered regions lie at residues 1–89 (MSSG…RTNP) and 195–218 (TESEEITDEEMLSAAESMETDASN). 2 stretches are compositionally biased toward basic residues: residues 8-18 (DKHRAYKRKGS) and 27-40 (PWQPHHRSRSRSPI). Residues 58 to 67 (SHLSSCTASK) show a composition bias toward polar residues. Residues 73 to 86 (TKTKENTSGKRDSR) are compositionally biased toward basic and acidic residues. Acidic residues predominate over residues 196–205 (ESEEITDEEM).

The protein belongs to the Bocaparvovirus Non-structural protein NP-1 family.

It localises to the host nucleus. Its function is as follows. Required for the expression of the capsid proteins. Performs the splicing and internal polyadenylation of the viral capsid-encoding mRNA precursor, which allows its maturation and expression. Transactivates the viral promoter. This is Non-structural protein NP-1 (NP1) from Human bocavirus 3 (HBoV3).